Reading from the N-terminus, the 328-residue chain is Nickel import system permease protein NikB (328 aa).

The next 6 membrane-spanning stretches (helical) occupy residues 11–31, 104–124, 139–159, 170–190, 229–249, and 279–299; these read LMQMIVVLFVISTLTFILMKL, LLISFSTLVLSLCISIPLGII, VISTLSISLPAFFIGIILLFI, ILSQFILPVITLSLGMCAYII, ILPIIPLLGISLGSLIGGTVV, and VLFIGFFVVIINTIADLLTLL. The ABC transmembrane type-1 domain maps to 100-297; the sequence is APITLLISFS…IINTIADLLT (198 aa).

The protein belongs to the binding-protein-dependent transport system permease family. OppBC subfamily. In terms of assembly, the complex is composed of two ATP-binding proteins (NikD and NikE), two transmembrane proteins (NikB and NikC) and a solute-binding protein (NikA).

The protein localises to the cell membrane. Functionally, part of the ABC transporter complex NikABCDE (Opp2) involved in nickel import. Probably responsible for the translocation of the substrate across the membrane. The sequence is that of Nickel import system permease protein NikB from Staphylococcus aureus (strain bovine RF122 / ET3-1).